The chain runs to 274 residues: Large ribosomal subunit protein uL2c (274 aa).

2 disordered regions span residues 1–22 and 225–254; these read MAIH…DSQV and PVDH…PALG.

It belongs to the universal ribosomal protein uL2 family. Part of the 50S ribosomal subunit.

It is found in the plastid. The protein localises to the chloroplast. This Sinapis alba (White mustard) protein is Large ribosomal subunit protein uL2c (rpl2).